The chain runs to 415 residues: tRNA(Met) cytidine acetate ligase (415 aa).

ATP is bound by residues 7-20 (IVEYNPFHNGHLYH), Gly-102, Asn-165, and 190-191 (RI).

It belongs to the TmcAL family.

Its subcellular location is the cytoplasm. It carries out the reaction cytidine(34) in elongator tRNA(Met) + acetate + ATP = N(4)-acetylcytidine(34) in elongator tRNA(Met) + AMP + diphosphate. Catalyzes the formation of N(4)-acetylcytidine (ac(4)C) at the wobble position of elongator tRNA(Met), using acetate and ATP as substrates. First activates an acetate ion to form acetyladenylate (Ac-AMP) and then transfers the acetyl group to tRNA to form ac(4)C34. This Acetivibrio thermocellus (strain ATCC 27405 / DSM 1237 / JCM 9322 / NBRC 103400 / NCIMB 10682 / NRRL B-4536 / VPI 7372) (Clostridium thermocellum) protein is tRNA(Met) cytidine acetate ligase.